The chain runs to 346 residues: Phenylalanine--tRNA ligase alpha subunit (346 aa).

E261 lines the Mg(2+) pocket.

The protein belongs to the class-II aminoacyl-tRNA synthetase family. Phe-tRNA synthetase alpha subunit type 1 subfamily. Tetramer of two alpha and two beta subunits. The cofactor is Mg(2+).

It localises to the cytoplasm. The catalysed reaction is tRNA(Phe) + L-phenylalanine + ATP = L-phenylalanyl-tRNA(Phe) + AMP + diphosphate + H(+). In Dehalococcoides mccartyi (strain ATCC BAA-2100 / JCM 16839 / KCTC 5957 / BAV1), this protein is Phenylalanine--tRNA ligase alpha subunit.